The primary structure comprises 421 residues: Signal recognition particle receptor FtsY (421 aa).

The segment covering 1-10 (MFSFFRRKKK) has biased composition (basic residues). A disordered region spans residues 1–22 (MFSFFRRKKKQETPAPEEAQIQ). GTP-binding positions include 228–235 (GINGAGKT), 309–313 (DTAGR), and 373–376 (TKLD).

The protein belongs to the GTP-binding SRP family. FtsY subfamily. In terms of assembly, part of the signal recognition particle protein translocation system, which is composed of SRP and FtsY. SRP is a ribonucleoprotein composed of Ffh and a 4.5S RNA molecule.

It localises to the cell membrane. Its subcellular location is the cytoplasm. The enzyme catalyses GTP + H2O = GDP + phosphate + H(+). Its function is as follows. Involved in targeting and insertion of nascent membrane proteins into the cytoplasmic membrane. Acts as a receptor for the complex formed by the signal recognition particle (SRP) and the ribosome-nascent chain (RNC). Interaction with SRP-RNC leads to the transfer of the RNC complex to the Sec translocase for insertion into the membrane, the hydrolysis of GTP by both Ffh and FtsY, and the dissociation of the SRP-FtsY complex into the individual components. This Neisseria meningitidis serogroup C protein is Signal recognition particle receptor FtsY.